The following is a 619-amino-acid chain: 1-deoxy-D-xylulose-5-phosphate synthase (619 aa).

Residues H74 and 115–117 (GHS) each bind thiamine diphosphate. Position 146 (D146) interacts with Mg(2+). Residues 147–148 (GA), N175, Y285, and E365 each bind thiamine diphosphate. N175 provides a ligand contact to Mg(2+).

This sequence belongs to the transketolase family. DXPS subfamily. In terms of assembly, homodimer. Mg(2+) serves as cofactor. The cofactor is thiamine diphosphate.

The catalysed reaction is D-glyceraldehyde 3-phosphate + pyruvate + H(+) = 1-deoxy-D-xylulose 5-phosphate + CO2. It participates in metabolic intermediate biosynthesis; 1-deoxy-D-xylulose 5-phosphate biosynthesis; 1-deoxy-D-xylulose 5-phosphate from D-glyceraldehyde 3-phosphate and pyruvate: step 1/1. In terms of biological role, catalyzes the acyloin condensation reaction between C atoms 2 and 3 of pyruvate and glyceraldehyde 3-phosphate to yield 1-deoxy-D-xylulose-5-phosphate (DXP). The protein is 1-deoxy-D-xylulose-5-phosphate synthase of Clostridium perfringens (strain ATCC 13124 / DSM 756 / JCM 1290 / NCIMB 6125 / NCTC 8237 / Type A).